Reading from the N-terminus, the 145-residue chain is D-aminoacyl-tRNA deacylase (145 aa).

The Gly-cisPro motif, important for rejection of L-amino acids signature appears at 137-138; sequence GP.

This sequence belongs to the DTD family. In terms of assembly, homodimer.

Its subcellular location is the cytoplasm. The enzyme catalyses glycyl-tRNA(Ala) + H2O = tRNA(Ala) + glycine + H(+). It catalyses the reaction a D-aminoacyl-tRNA + H2O = a tRNA + a D-alpha-amino acid + H(+). Functionally, an aminoacyl-tRNA editing enzyme that deacylates mischarged D-aminoacyl-tRNAs. Also deacylates mischarged glycyl-tRNA(Ala), protecting cells against glycine mischarging by AlaRS. Acts via tRNA-based rather than protein-based catalysis; rejects L-amino acids rather than detecting D-amino acids in the active site. By recycling D-aminoacyl-tRNA to D-amino acids and free tRNA molecules, this enzyme counteracts the toxicity associated with the formation of D-aminoacyl-tRNA entities in vivo and helps enforce protein L-homochirality. This is D-aminoacyl-tRNA deacylase from Enterobacter sp. (strain 638).